The chain runs to 607 residues: MSVSFDSSAFLATCSGRPGVYRMFDADARLLYVGKAKNLKKRLSSYFRKTGQAPKTAALVARIAQVETTITANETEALLLEQTLIKEWRPPYNILLRDDKSYPYVFLSDGEFPRLGIHRGAKKAKGRYFGPYPSALAIRESLSLLQKTFLVRQCEDSYYRNRTRPCLQYQIKRCKGPCVGLVSPEEYAEDVRHSVMFLEGRSNALSEELSASMEKASMALEFERAAELRDQISMLRRVQDQQSMEGGSGDVDVVAVMLNPGGACVHLISVRGGRVLGSKNFFPQVAIEEEGGEVLMAFLAQYYLGNAERDLPSELIVNVQHEDFSTLIEAVESLRGRSLSISLRVRGTRARWQQLAVTNAEQALAARLANRQHLAERFEALATVLEMDEPPQRMECFDISHSSGEATVASCVVFGPEGPLKSDYRRFNIEGVTPGDDYAAMHQALTRRFSKIKDGEGKLPDVLLVDGGKGQLAMAREVLQELAVPDLILLGVAKGTTRKPGLEVLYLNDAEHEFTLPGNSPALHLIQQIRDESHRFAITGHRARRGKARRTSTLEEVAGIGPKRRRELLNHFGGLQELSRASAEEIAKAPGISKKLAELIYATLHSE.

The GIY-YIG domain occupies 16-94; that stretch reads GRPGVYRMFD…IKEWRPPYNI (79 aa). The UVR domain maps to 203-238; that stretch reads NALSEELSASMEKASMALEFERAAELRDQISMLRRV.

This sequence belongs to the UvrC family. As to quaternary structure, interacts with UvrB in an incision complex.

It is found in the cytoplasm. The UvrABC repair system catalyzes the recognition and processing of DNA lesions. UvrC both incises the 5' and 3' sides of the lesion. The N-terminal half is responsible for the 3' incision and the C-terminal half is responsible for the 5' incision. The protein is UvrABC system protein C of Ectopseudomonas mendocina (strain ymp) (Pseudomonas mendocina).